An 86-amino-acid polypeptide reads, in one-letter code: Mu-theraphotoxin-Cg2a 2 (86 aa).

A signal peptide spans 1–21 (MKVSVVITLAVLGVMFVWASA). A propeptide spanning residues 22–50 (AELEERGSDQRDSPAWIKSMERIFQSEER) is cleaved from the precursor. 3 disulfide bridges follow: Cys52–Cys66, Cys59–Cys71, and Cys65–Cys78. Phe84 carries the phenylalanine amide modification.

Belongs to the neurotoxin 10 (Hwtx-1) family. 37 (Jztx-31) subfamily. Expressed by the venom gland.

The protein localises to the secreted. In terms of biological role, inhibits both peak current and fast inactivation of voltage-gated sodium channels (Nav) channels. Inhibits the inactivation of Nav on DRG neurons (EC(50)=1.77 uM) and peak current of cardiac myocytes (IC(50)=0.90 uM). This Chilobrachys guangxiensis (Chinese earth tiger tarantula) protein is Mu-theraphotoxin-Cg2a 2.